A 980-amino-acid polypeptide reads, in one-letter code: Valine--tRNA ligase (980 aa).

The short motif at 43–53 (PNVTGTLHMGH) is the 'HIGH' region element. The 'KMSKS' region motif lies at 586 to 590 (KMSKS). Residue Lys-589 coordinates ATP. Residues 914–980 (LVDMDAERMR…AGLREQRGKL (67 aa)) are a coiled coil.

The protein belongs to the class-I aminoacyl-tRNA synthetase family. ValS type 1 subfamily. Monomer.

It is found in the cytoplasm. The catalysed reaction is tRNA(Val) + L-valine + ATP = L-valyl-tRNA(Val) + AMP + diphosphate. Its function is as follows. Catalyzes the attachment of valine to tRNA(Val). As ValRS can inadvertently accommodate and process structurally similar amino acids such as threonine, to avoid such errors, it has a 'posttransfer' editing activity that hydrolyzes mischarged Thr-tRNA(Val) in a tRNA-dependent manner. This Xanthomonas oryzae pv. oryzae (strain PXO99A) protein is Valine--tRNA ligase.